A 271-amino-acid chain; its full sequence is uncharacterized protein (271 aa).

Residues 1-18 (MKGFFLIAGFLLFARALC) form the signal peptide. Residues 19–187 (ASWNVEEGTL…FSPPPKRANY (169 aa)) lie on the Lumenal side of the membrane. The helical transmembrane segment at 188-208 (FLSICFSVSVVVSLIGLLGVW) threads the bilayer. The Cytoplasmic portion of the chain corresponds to 209-230 (QKLLPKSNVYSVSSSSFARTFG). Residues 231–251 (FASLAVAEILLFIYWTSLSIF) traverse the membrane as a helical segment. Residues 252–271 (QFGAYAAGVAIMCGIAAKSL) lie on the Lumenal side of the membrane.

Its subcellular location is the endoplasmic reticulum membrane. This is an uncharacterized protein from Schizosaccharomyces pombe (strain 972 / ATCC 24843) (Fission yeast).